Consider the following 488-residue polypeptide: MSQSVEERTRIKNQRYESGVIPYAKMGYWDPNYVVKETDVLALFRVTPQPGVDPVEASAAVAGESSTATWTVVWTDLLTACDLYRAKAYKVDAVPNTTDQYFAFIAYDIDLFEEGSIANLTASIIGNVFGFKAVKALRLEDMRIPVAYLKTFQGPATGLIVERERMDKFGRPFLGATVKPKLGLSGKNYGRVVYEGLKGGLDFLKDDENINSQPFMRWKERFLYSMEAVNRAIAATGETKGHYMNVTAATMEEMYERAEFAKQLGSIIIMIDLVIGYTAIQTMAIWARKNDMILHLHRAGNSTYSRQKIHGMNFRVICKWMRMSGVDHIHAGTVVGKLEGDPLMIRGFYNTLLQTHLEVNLPQGIFFEQDWASLRKVTPVASGGIHCGQMHQLLDYLGNDVVLQFGGGTIGHPDGIQAGATANRVALEAMVLARNEGRDYVAEGPQILRDAAKTCGPLQTALDLWKDITFNYTSTDTADFVETPTANV.

The substrate site is built by Asn127 and Thr177. Catalysis depends on Lys179, which acts as the Proton acceptor. Lys181 contacts substrate. Mg(2+) contacts are provided by Lys205, Asp207, and Glu208. Position 205 is an N6-carboxylysine (Lys205). Residue His297 is the Proton acceptor of the active site. The substrate site is built by Arg298, His330, and Ser382.

It belongs to the RuBisCO large chain family. Type I subfamily. In terms of assembly, heterohexadecamer of 8 large chains and 8 small chains. Mg(2+) serves as cofactor.

Its subcellular location is the plastid. It localises to the chloroplast. The enzyme catalyses 2 (2R)-3-phosphoglycerate + 2 H(+) = D-ribulose 1,5-bisphosphate + CO2 + H2O. The catalysed reaction is D-ribulose 1,5-bisphosphate + O2 = 2-phosphoglycolate + (2R)-3-phosphoglycerate + 2 H(+). Its function is as follows. RuBisCO catalyzes two reactions: the carboxylation of D-ribulose 1,5-bisphosphate, the primary event in carbon dioxide fixation, as well as the oxidative fragmentation of the pentose substrate in the photorespiration process. Both reactions occur simultaneously and in competition at the same active site. This Gracilaria tenuistipitata var. liui (Red alga) protein is Ribulose bisphosphate carboxylase large chain.